Consider the following 286-residue polypeptide: Polyamine aminopropyltransferase (286 aa).

Positions T5 to D238 constitute a PABS domain. Residue Q33 participates in S-methyl-5'-thioadenosine binding. Positions 64 and 88 each coordinate spermidine. S-methyl-5'-thioadenosine-binding positions include E108 and D140–G141. Catalysis depends on D158, which acts as the Proton acceptor. Spermidine is bound at residue D158–D161. P165 contributes to the S-methyl-5'-thioadenosine binding site.

It belongs to the spermidine/spermine synthase family. Homodimer or homotetramer.

Its subcellular location is the cytoplasm. It catalyses the reaction S-adenosyl 3-(methylsulfanyl)propylamine + putrescine = S-methyl-5'-thioadenosine + spermidine + H(+). The protein operates within amine and polyamine biosynthesis; spermidine biosynthesis; spermidine from putrescine: step 1/1. Functionally, catalyzes the irreversible transfer of a propylamine group from the amino donor S-adenosylmethioninamine (decarboxy-AdoMet) to putrescine (1,4-diaminobutane) to yield spermidine. This chain is Polyamine aminopropyltransferase, found in Salmonella newport (strain SL254).